The chain runs to 602 residues: DEAD-box ATP-dependent RNA helicase 53 (602 aa).

Low complexity predominate over residues 33–43; that stretch reads ASPLDPCRGPA. The tract at residues 33 to 76 is disordered; it reads ASPLDPCRGPAAPEPPRRRAFHGSPSPLGFRSTPASWSSPEAGA. The Q motif signature appears at 84–112; the sequence is LEVARLGISPWIVERLAARGITRLFPIQR. The 174-residue stretch at 115–288 folds into the Helicase ATP-binding domain; sequence LDPAMQGKDM…SKYLKDPIII (174 aa). Position 128–135 (128–135) interacts with ATP; that stretch reads ARTGTGKT. A DEAD box motif is present at residues 236–239; that stretch reads DEAD. Residues 317–462 enclose the Helicase C-terminal domain; that stretch reads ILGPLIKEHA…LPKIEVADEA (146 aa). The disordered stretch occupies residues 503–602; the sequence is FGDFDGFGSS…GRSGGFDDSN (100 aa).

It belongs to the DEAD box helicase family. DDX21/DDX50 subfamily.

The enzyme catalyses ATP + H2O = ADP + phosphate + H(+). The chain is DEAD-box ATP-dependent RNA helicase 53 from Oryza sativa subsp. japonica (Rice).